A 46-amino-acid polypeptide reads, in one-letter code: Large ribosomal subunit protein bL34 (46 aa).

Belongs to the bacterial ribosomal protein bL34 family.

This is Large ribosomal subunit protein bL34 (rpmH) from Mycobacterium avium.